Consider the following 167-residue polypeptide: Adenylylsulfate reductase subunit beta (167 aa).

4Fe-4S ferredoxin-type domains are found at residues 1–35 (MPTFVDPSKCDGCKGGEKTACMYICPNDLMILDPE) and 38–67 (KAFNQEPEACWECYSCIKICPQGAITARPY). [4Fe-4S] cluster is bound by residues cysteine 10, cysteine 13, cysteine 21, cysteine 25, cysteine 47, cysteine 50, cysteine 53, and cysteine 57.

As to quaternary structure, heterodimer composed of AprA and AprB. The heterodimers can dimerize to form heterotetramers. It depends on [4Fe-4S] cluster as a cofactor.

It localises to the cytoplasm. Its function is as follows. Iron-sulfur cluster subunit of the adenylylsulfate reductase which catalyzes reversibly the reduction of adenosine 5'-phosphosulfate (APS) to sulfite and AMP during dissimilatory sulfate reduction. The iron-sulfur cluster 2 is thought to accept electrons from a still unknown electron donor and transfer electrons to the iron-sulfur cluster 1 of this protein and then onto the FAD of AprA. The protein is Adenylylsulfate reductase subunit beta of Megalodesulfovibrio gigas (strain ATCC 19364 / DSM 1382 / NCIMB 9332 / VKM B-1759) (Desulfovibrio gigas).